The primary structure comprises 361 residues: MSKFSFNIYHQHKKARSGIIVTAHGEMRTPAFMPVGTRGTVKAMLPESVAETGADILLGNTYHLMLQPTAERIVQLGGLHKFMNWDKPILTDSGGFQVMSLSKLCKITEEGVSFSSHINGDKYMLTPERSTEIQYLLGSTITMAFDECTPYPATFEEAKTSMQLTTRWANRSRNAFVKREGYAQFGIIQGSVYEELREQSSKDLVELDFEGYAVGGLAVGEGQELMFKVLDYAPDFLPQNKPRYLMGVGKPADIIGAVSRGIDMFDCVIPTRSGRNGQAFTKYGTVNIRNSKYADDNKPLEHDCLCPACRNYSKAYLHHLVRIGEILGSMLMTWHNLTYFQNLMSRIRAYIKLGKDFDFDS.

The Proton acceptor role is filled by aspartate 92. Residues 92 to 96 (DSGGF), aspartate 146, glutamine 189, and glycine 216 each bind substrate. The tract at residues 247–253 (GVGKPAD) is RNA binding. The active-site Nucleophile is aspartate 266. The segment at 271 to 275 (TRSGR) is RNA binding; important for wobble base 34 recognition. The Zn(2+) site is built by cysteine 304, cysteine 306, cysteine 309, and histidine 335.

It belongs to the queuine tRNA-ribosyltransferase family. Homodimer. Within each dimer, one monomer is responsible for RNA recognition and catalysis, while the other monomer binds to the replacement base PreQ1. Requires Zn(2+) as cofactor.

It carries out the reaction 7-aminomethyl-7-carbaguanine + guanosine(34) in tRNA = 7-aminomethyl-7-carbaguanosine(34) in tRNA + guanine. Its pathway is tRNA modification; tRNA-queuosine biosynthesis. Functionally, catalyzes the base-exchange of a guanine (G) residue with the queuine precursor 7-aminomethyl-7-deazaguanine (PreQ1) at position 34 (anticodon wobble position) in tRNAs with GU(N) anticodons (tRNA-Asp, -Asn, -His and -Tyr). Catalysis occurs through a double-displacement mechanism. The nucleophile active site attacks the C1' of nucleotide 34 to detach the guanine base from the RNA, forming a covalent enzyme-RNA intermediate. The proton acceptor active site deprotonates the incoming PreQ1, allowing a nucleophilic attack on the C1' of the ribose to form the product. After dissociation, two additional enzymatic reactions on the tRNA convert PreQ1 to queuine (Q), resulting in the hypermodified nucleoside queuosine (7-(((4,5-cis-dihydroxy-2-cyclopenten-1-yl)amino)methyl)-7-deazaguanosine). This is Queuine tRNA-ribosyltransferase from Rickettsia peacockii (strain Rustic).